An 83-amino-acid polypeptide reads, in one-letter code: MSYYGNGGYNPYGAYGNVPPPVYGTPGLAPPTVHVHTDGGHHHGHHHHHHSFLHELGHALTGHHHHHHGHHFGHHHHHHHGHH.

The interval 62–83 is disordered; sequence GHHHHHHGHHFGHHHHHHHGHH.

Weakly expressed in the intestine, but expression is up-regulated in response to Cu(2+).

In terms of biological role, plays a role in the stress response to heavy metals such as copper, probably in a fos-1/kgb-1-dependent manner. In Caenorhabditis elegans, this protein is Protein kreg-1.